A 207-amino-acid chain; its full sequence is Dephospho-CoA kinase (207 aa).

A DPCK domain is found at 5 to 207 (IVGLTGGIAS…AALQTHRIEN (203 aa)). Residue 13–18 (ASGKSA) participates in ATP binding.

Belongs to the CoaE family.

It localises to the cytoplasm. The catalysed reaction is 3'-dephospho-CoA + ATP = ADP + CoA + H(+). It participates in cofactor biosynthesis; coenzyme A biosynthesis; CoA from (R)-pantothenate: step 5/5. Functionally, catalyzes the phosphorylation of the 3'-hydroxyl group of dephosphocoenzyme A to form coenzyme A. This chain is Dephospho-CoA kinase, found in Xanthomonas campestris pv. campestris (strain ATCC 33913 / DSM 3586 / NCPPB 528 / LMG 568 / P 25).